Consider the following 538-residue polypeptide: Bifunctional purine biosynthesis protein PurH (538 aa).

The MGS-like domain maps to 6–158 (KHIPAPDLHR…KNHAYVATVV (153 aa)).

It belongs to the PurH family.

The enzyme catalyses (6R)-10-formyltetrahydrofolate + 5-amino-1-(5-phospho-beta-D-ribosyl)imidazole-4-carboxamide = 5-formamido-1-(5-phospho-D-ribosyl)imidazole-4-carboxamide + (6S)-5,6,7,8-tetrahydrofolate. It carries out the reaction IMP + H2O = 5-formamido-1-(5-phospho-D-ribosyl)imidazole-4-carboxamide. The protein operates within purine metabolism; IMP biosynthesis via de novo pathway; 5-formamido-1-(5-phospho-D-ribosyl)imidazole-4-carboxamide from 5-amino-1-(5-phospho-D-ribosyl)imidazole-4-carboxamide (10-formyl THF route): step 1/1. It functions in the pathway purine metabolism; IMP biosynthesis via de novo pathway; IMP from 5-formamido-1-(5-phospho-D-ribosyl)imidazole-4-carboxamide: step 1/1. The protein is Bifunctional purine biosynthesis protein PurH of Brucella ovis (strain ATCC 25840 / 63/290 / NCTC 10512).